Consider the following 838-residue polypeptide: Probable inorganic carbon transporter subunit DabA (838 aa).

Zn(2+) contacts are provided by Cys353, Asp355, His537, and Cys552.

It belongs to the inorganic carbon transporter (TC 9.A.2) DabA family. As to quaternary structure, forms a complex with DabB. Requires Zn(2+) as cofactor.

Its subcellular location is the cell membrane. Functionally, part of an energy-coupled inorganic carbon pump. The protein is Probable inorganic carbon transporter subunit DabA of Roseiflexus sp. (strain RS-1).